A 289-amino-acid polypeptide reads, in one-letter code: tRNA pseudouridine synthase B (289 aa).

Aspartate 38 (nucleophile) is an active-site residue.

This sequence belongs to the pseudouridine synthase TruB family. Type 1 subfamily.

It catalyses the reaction uridine(55) in tRNA = pseudouridine(55) in tRNA. In terms of biological role, responsible for synthesis of pseudouridine from uracil-55 in the psi GC loop of transfer RNAs. In Acaryochloris marina (strain MBIC 11017), this protein is tRNA pseudouridine synthase B.